Consider the following 523-residue polypeptide: MACVSTCLILSPRLTQVGLSSKKPFLIRLRSPVDRYSFPRMLTERCLSTRRKFNRHGIAVVKAASLDKVSGAIKPGGLVESDKLPTDVRKRAMDAVDECGRRVTVGDVASRGGLKVTEAQTALQAIAADTDGFLEVSDEGDVLYVFPRDYRTKLAAKSLRIQIEPFLEKAKGAVDYLARVSFGTALIASIVIVYTSIIALLSSKSEDDNRQRRRGRSYDSGFNFYINPVDLLWYWDPNYYNRRRAREDEGKGMNFIESVFSFVFGDGDPNQGIEEERWQMIGQYITSRGGVVAADELAPYLDVPSSKSAMNDESYILPVLLRFDGQPELDEEGNILYCFPSLQRTASGSSRRKEYVGKWFDWVADMEKFFKEKKWQFSKTSTSERALVIGLGAVNLFGVIVLNTLLNEMSVRPGGFLTFVKNIYPLLQIYAGSFFTIPLIRWFSIKRKNNQIENRNKARLQFARALESPDIALRRKLLSARDMAQKTVIGKDRIVYSTDRDMMEQNYETDEWDRRFKELEKSD.

The transit peptide at M1–A63 directs the protein to the chloroplast. 3 consecutive transmembrane segments (helical) span residues V180–L200, A386–L406, and I423–F443.

It is found in the plastid. The protein resides in the chloroplast membrane. This is an uncharacterized protein from Arabidopsis thaliana (Mouse-ear cress).